Consider the following 443-residue polypeptide: ATP-dependent protease ATPase subunit HslU (443 aa).

Residues Ile-18 and 60 to 65 each bind ATP; that span reads GVGKTE. Positions 139-158 are disordered; the sequence is AKNNWGQNETPAEPSSARQS. The ATP site is built by Asp-256, Glu-321, and Arg-393.

The protein belongs to the ClpX chaperone family. HslU subfamily. In terms of assembly, a double ring-shaped homohexamer of HslV is capped on each side by a ring-shaped HslU homohexamer. The assembly of the HslU/HslV complex is dependent on binding of ATP.

It is found in the cytoplasm. Its function is as follows. ATPase subunit of a proteasome-like degradation complex; this subunit has chaperone activity. The binding of ATP and its subsequent hydrolysis by HslU are essential for unfolding of protein substrates subsequently hydrolyzed by HslV. HslU recognizes the N-terminal part of its protein substrates and unfolds these before they are guided to HslV for hydrolysis. The polypeptide is ATP-dependent protease ATPase subunit HslU (Erwinia tasmaniensis (strain DSM 17950 / CFBP 7177 / CIP 109463 / NCPPB 4357 / Et1/99)).